Here is a 177-residue protein sequence, read N- to C-terminus: Acireductone dioxygenase (177 aa).

Fe(2+) is bound by residues His97, His99, Glu103, and His141. The Ni(2+) site is built by His97, His99, Glu103, and His141.

It belongs to the acireductone dioxygenase (ARD) family. In terms of assembly, monomer. The cofactor is Fe(2+). Ni(2+) serves as cofactor.

The enzyme catalyses 1,2-dihydroxy-5-(methylsulfanyl)pent-1-en-3-one + O2 = 3-(methylsulfanyl)propanoate + CO + formate + 2 H(+). It catalyses the reaction 1,2-dihydroxy-5-(methylsulfanyl)pent-1-en-3-one + O2 = 4-methylsulfanyl-2-oxobutanoate + formate + 2 H(+). It functions in the pathway amino-acid biosynthesis; L-methionine biosynthesis via salvage pathway; L-methionine from S-methyl-5-thio-alpha-D-ribose 1-phosphate: step 5/6. Functionally, catalyzes 2 different reactions between oxygen and the acireductone 1,2-dihydroxy-3-keto-5-methylthiopentene (DHK-MTPene) depending upon the metal bound in the active site. Fe-containing acireductone dioxygenase (Fe-ARD) produces formate and 2-keto-4-methylthiobutyrate (KMTB), the alpha-ketoacid precursor of methionine in the methionine recycle pathway. Ni-containing acireductone dioxygenase (Ni-ARD) produces methylthiopropionate, carbon monoxide and formate, and does not lie on the methionine recycle pathway. The chain is Acireductone dioxygenase from Leptospira biflexa serovar Patoc (strain Patoc 1 / ATCC 23582 / Paris).